Consider the following 89-residue polypeptide: Small ribosomal subunit protein uS15 (89 aa).

It belongs to the universal ribosomal protein uS15 family. Part of the 30S ribosomal subunit. Forms a bridge to the 50S subunit in the 70S ribosome, contacting the 23S rRNA.

Its function is as follows. One of the primary rRNA binding proteins, it binds directly to 16S rRNA where it helps nucleate assembly of the platform of the 30S subunit by binding and bridging several RNA helices of the 16S rRNA. Forms an intersubunit bridge (bridge B4) with the 23S rRNA of the 50S subunit in the ribosome. In Salmonella schwarzengrund (strain CVM19633), this protein is Small ribosomal subunit protein uS15.